We begin with the raw amino-acid sequence, 494 residues long: Aspartyl/glutamyl-tRNA(Asn/Gln) amidotransferase subunit B (494 aa).

Belongs to the GatB/GatE family. GatB subfamily. As to quaternary structure, heterotrimer of A, B and C subunits.

The enzyme catalyses L-glutamyl-tRNA(Gln) + L-glutamine + ATP + H2O = L-glutaminyl-tRNA(Gln) + L-glutamate + ADP + phosphate + H(+). It catalyses the reaction L-aspartyl-tRNA(Asn) + L-glutamine + ATP + H2O = L-asparaginyl-tRNA(Asn) + L-glutamate + ADP + phosphate + 2 H(+). Functionally, allows the formation of correctly charged Asn-tRNA(Asn) or Gln-tRNA(Gln) through the transamidation of misacylated Asp-tRNA(Asn) or Glu-tRNA(Gln) in organisms which lack either or both of asparaginyl-tRNA or glutaminyl-tRNA synthetases. The reaction takes place in the presence of glutamine and ATP through an activated phospho-Asp-tRNA(Asn) or phospho-Glu-tRNA(Gln). In Synechococcus sp. (strain CC9605), this protein is Aspartyl/glutamyl-tRNA(Asn/Gln) amidotransferase subunit B.